The primary structure comprises 61 residues: Small ribosomal subunit protein uS14 (61 aa).

Zn(2+) is bound by residues Cys-24, Cys-27, Cys-40, and Cys-43.

The protein belongs to the universal ribosomal protein uS14 family. Zinc-binding uS14 subfamily. As to quaternary structure, part of the 30S ribosomal subunit. Contacts proteins S3 and S10. It depends on Zn(2+) as a cofactor.

In terms of biological role, binds 16S rRNA, required for the assembly of 30S particles and may also be responsible for determining the conformation of the 16S rRNA at the A site. This chain is Small ribosomal subunit protein uS14, found in Staphylococcus carnosus (strain TM300).